The chain runs to 219 residues: Ribose-5-phosphate isomerase A (219 aa).

Substrate-binding positions include 28 to 31 (TGST), 81 to 84 (DGAD), and 94 to 97 (KGGG). Residue Glu103 is the Proton acceptor of the active site. Substrate is bound at residue Lys121.

This sequence belongs to the ribose 5-phosphate isomerase family. Homodimer.

The catalysed reaction is aldehydo-D-ribose 5-phosphate = D-ribulose 5-phosphate. It participates in carbohydrate degradation; pentose phosphate pathway; D-ribose 5-phosphate from D-ribulose 5-phosphate (non-oxidative stage): step 1/1. Its function is as follows. Catalyzes the reversible conversion of ribose-5-phosphate to ribulose 5-phosphate. The sequence is that of Ribose-5-phosphate isomerase A from Acidithiobacillus ferrooxidans (strain ATCC 23270 / DSM 14882 / CIP 104768 / NCIMB 8455) (Ferrobacillus ferrooxidans (strain ATCC 23270)).